Consider the following 351-residue polypeptide: UDP-N-acetylglucosamine--N-acetylmuramyl-(pentapeptide) pyrophosphoryl-undecaprenol N-acetylglucosamine transferase (351 aa).

UDP-N-acetyl-alpha-D-glucosamine contacts are provided by residues 13–15 (TGG), Asn125, Arg161, Ser189, Ile241, 260–265 (ALTVCE), and Gln285.

This sequence belongs to the glycosyltransferase 28 family. MurG subfamily.

It is found in the cell inner membrane. The catalysed reaction is di-trans,octa-cis-undecaprenyl diphospho-N-acetyl-alpha-D-muramoyl-L-alanyl-D-glutamyl-meso-2,6-diaminopimeloyl-D-alanyl-D-alanine + UDP-N-acetyl-alpha-D-glucosamine = di-trans,octa-cis-undecaprenyl diphospho-[N-acetyl-alpha-D-glucosaminyl-(1-&gt;4)]-N-acetyl-alpha-D-muramoyl-L-alanyl-D-glutamyl-meso-2,6-diaminopimeloyl-D-alanyl-D-alanine + UDP + H(+). It functions in the pathway cell wall biogenesis; peptidoglycan biosynthesis. Its function is as follows. Cell wall formation. Catalyzes the transfer of a GlcNAc subunit on undecaprenyl-pyrophosphoryl-MurNAc-pentapeptide (lipid intermediate I) to form undecaprenyl-pyrophosphoryl-MurNAc-(pentapeptide)GlcNAc (lipid intermediate II). The protein is UDP-N-acetylglucosamine--N-acetylmuramyl-(pentapeptide) pyrophosphoryl-undecaprenol N-acetylglucosamine transferase of Haemophilus influenzae (strain 86-028NP).